The sequence spans 128 residues: Histone H2A (128 aa).

The segment at 1–22 (MSGRGKTGGKARAKAKTRSSRA) is disordered. Ser-2 carries the N-acetylserine modification. Position 2 is a phosphoserine (Ser-2). N6-(2-hydroxyisobutyryl)lysine is present on Lys-6. An N6-acetyllysine modification is found at Lys-6. Residues 7–19 (TGGKARAKAKTRS) show a composition bias toward basic residues. Lys-10 is subject to N6-(2-hydroxyisobutyryl)lysine; alternate. Lys-10 bears the N6-lactoyllysine; alternate mark. An N6-succinyllysine modification is found at Lys-10. Glycyl lysine isopeptide (Lys-Gly) (interchain with G-Cter in ubiquitin) cross-links involve residues Lys-14 and Lys-16. Lys-37 carries the N6-(2-hydroxyisobutyryl)lysine; alternate modification. N6-(2-hydroxyisobutyryl)lysine occurs at positions 75 and 76. The residue at position 96 (Lys-96) is an N6-(2-hydroxyisobutyryl)lysine; alternate. Lys-96 is subject to N6-succinyllysine. Position 96 is an N6-glutaryllysine; alternate (Lys-96). N5-methylglutamine is present on Gln-105. Position 119 is an N6-(2-hydroxyisobutyryl)lysine; alternate (Lys-119). N6-glutaryllysine; alternate is present on residues Lys-119, Lys-120, and Lys-126. Lys-120 participates in a covalent cross-link: Glycyl lysine isopeptide (Lys-Gly) (interchain with G-Cter in ubiquitin).

The nucleosome is a histone octamer containing two molecules each of H2A, H2B, H3 and H4 assembled in one H3-H4 heterotetramer and two H2A-H2B heterodimers. The octamer wraps approximately 147 bp of DNA. Post-translationally, monoubiquitination of Lys-120 (H2AK119Ub) gives a specific tag for epigenetic transcriptional repression. Following DNA double-strand breaks (DSBs), it is ubiquitinated through 'Lys-63' linkage of ubiquitin moieties, leading to the recruitment of repair proteins to sites of DNA damage. H2AK119Ub and ionizing radiation-induced 'Lys-63'-linked ubiquitination are distinct events. In terms of processing, phosphorylation on Ser-2 is enhanced during mitosis. Phosphorylation on Ser-2 directly represses transcription. Glutamine methylation at Gln-105 (H2AQ104me) by FBL is specifically dedicated to polymerase I. It is present at 35S ribosomal DNA locus and impairs binding of the FACT complex. Expressed and secreted by skin epithelium.

It localises to the nucleus. The protein resides in the chromosome. Its function is as follows. Core component of nucleosome. Nucleosomes wrap and compact DNA into chromatin, limiting DNA accessibility to the cellular machineries which require DNA as a template. Histones thereby play a central role in transcription regulation, DNA repair, DNA replication and chromosomal stability. DNA accessibility is regulated via a complex set of post-translational modifications of histones, also called histone code, and nucleosome remodeling. Functionally, the secreted form has antibacterial activity against Gram-positive bacteria and antifungal activity against S.cerevisiae. The chain is Histone H2A from Oncorhynchus mykiss (Rainbow trout).